Reading from the N-terminus, the 135-residue chain is ATP synthase epsilon chain (135 aa).

It belongs to the ATPase epsilon chain family. In terms of assembly, F-type ATPases have 2 components, CF(1) - the catalytic core - and CF(0) - the membrane proton channel. CF(1) has five subunits: alpha(3), beta(3), gamma(1), delta(1), epsilon(1). CF(0) has three main subunits: a, b and c.

Its subcellular location is the cell inner membrane. Functionally, produces ATP from ADP in the presence of a proton gradient across the membrane. The protein is ATP synthase epsilon chain of Nitrobacter winogradskyi (strain ATCC 25391 / DSM 10237 / CIP 104748 / NCIMB 11846 / Nb-255).